The sequence spans 445 residues: Reticulon-4 receptor-like 1 (445 aa).

Positions 1 to 24 (MLRKGCCVELLLLLLAGELPLGGG) are cleaved as a signal peptide. The LRRNT domain occupies 25 to 54 (CPRDCVCYPAPMTVSCQAHNFAAIPEGIPE). LRR repeat units follow at residues 55–76 (DSER…HFSP), 77–98 (AMVT…TFEG), 101–123 (HLEE…TFQG), 126–147 (KLHA…IFGG), 150–171 (SLQY…IFVD), 174–195 (NLSH…IFRG), 198–219 (NLDR…AFHD), and 222–243 (RLTT…CLAP). Positions 255–306 (NAWDCGCRARSLWEWLRRFRGSSSAVPCATPELRQGQDLKLLRVEDFRNCTG) constitute an LRRCT domain. Disordered regions lie at residues 307 to 377 (PVSP…SGKE) and 401 to 424 (RPKR…QQAS). Basic residues-rich tracts occupy residues 352 to 366 (GYKK…HRNR) and 401 to 413 (RPKR…RRTP). Ser424 is lipidated: GPI-anchor amidated serine. A helical membrane pass occupies residues 424-444 (SSGTALGAPLLAWILGLAVTL). Positions 425–445 (SGTALGAPLLAWILGLAVTLR) are cleaved as a propeptide — removed in mature form.

It belongs to the Nogo receptor family. As to quaternary structure, identified in a complex that contains RTN4R, RTN4RL1 and NGFR; the interaction depends on the presence of chondroitin sulfate proteoglycans. Does not interact with MAG, OMG and RTN4. As to expression, detected in brain (at protein level). Detected in retina ganglion cell layer and inner nuclear layer.

The protein resides in the cell membrane. The protein localises to the membrane raft. Its subcellular location is the perikaryon. It is found in the cell projection. Its function is as follows. Cell surface receptor that plays a functionally redundant role in postnatal brain development and in regulating axon regeneration in the adult central nervous system. Contributes to normal axon migration across the brain midline and normal formation of the corpus callosum. Protects motoneurons against apoptosis; protection against apoptosis is probably mediated by MAG. Plays a role in inhibiting neurite outgrowth and axon regeneration via its binding to neuronal chondroitin sulfate proteoglycans. Binds heparin. Like other family members, plays a role in restricting the number dendritic spines and the number of synapses that are formed during brain development. Signaling mediates activation of Rho and downstream reorganization of the actin cytoskeleton. This Mus musculus (Mouse) protein is Reticulon-4 receptor-like 1.